A 142-amino-acid polypeptide reads, in one-letter code: Large ribosomal subunit protein uL11 (142 aa).

It belongs to the universal ribosomal protein uL11 family. Part of the ribosomal stalk of the 50S ribosomal subunit. Interacts with L10 and the large rRNA to form the base of the stalk. L10 forms an elongated spine to which L12 dimers bind in a sequential fashion forming a multimeric L10(L12)X complex. One or more lysine residues are methylated.

Forms part of the ribosomal stalk which helps the ribosome interact with GTP-bound translation factors. This is Large ribosomal subunit protein uL11 from Shewanella frigidimarina (strain NCIMB 400).